The primary structure comprises 359 residues: MRVLGIETSCDETAAAIVERDDMGEGRILSNVVLSQIAEHEPYGGVVPEIAARAHAEALDRLVDRALNDAGLKLYEVDAVAATAGPGLIGGLIVGLMTAKALAMAAQKPFYAVNHLEGHALTARLTDGLPFPYLLLLVSGGHTQMVLVRGIGDYERLGTTIDDALGEAFDKTAKLLGLPYPGGPAVERMALQGDQKRFALPRPLKGEARLDFSFSGLKTAVRQTATELVPLTDQDVTDICASFQAAVADTLSDRVGRSLERFKTEFPDCATPSLVVAGGVAANKTLRAALENLCTRHGFAFIAPPLNLCTDNAAMIAWAGAERAATQAPDSLDIAPRSRWPLDEKSAPVFGTGRRGAKA.

2 residues coordinate Fe cation: His115 and His119. Substrate is bound by residues 137–141, Asp170, Gly183, and Asn283; that span reads LVSGG. Residue Asp311 coordinates Fe cation. The disordered stretch occupies residues 328–359; it reads APDSLDIAPRSRWPLDEKSAPVFGTGRRGAKA.

This sequence belongs to the KAE1 / TsaD family. Requires Fe(2+) as cofactor.

The protein localises to the cytoplasm. The enzyme catalyses L-threonylcarbamoyladenylate + adenosine(37) in tRNA = N(6)-L-threonylcarbamoyladenosine(37) in tRNA + AMP + H(+). In terms of biological role, required for the formation of a threonylcarbamoyl group on adenosine at position 37 (t(6)A37) in tRNAs that read codons beginning with adenine. Is involved in the transfer of the threonylcarbamoyl moiety of threonylcarbamoyl-AMP (TC-AMP) to the N6 group of A37, together with TsaE and TsaB. TsaD likely plays a direct catalytic role in this reaction. The sequence is that of tRNA N6-adenosine threonylcarbamoyltransferase from Brucella ovis (strain ATCC 25840 / 63/290 / NCTC 10512).